A 361-amino-acid chain; its full sequence is Ribosomal RNA large subunit methyltransferase M (361 aa).

S-adenosyl-L-methionine contacts are provided by residues serine 193, 226–229, aspartate 245, aspartate 265, and aspartate 283; that span reads CPGG. Lysine 312 serves as the catalytic Proton acceptor.

The protein belongs to the class I-like SAM-binding methyltransferase superfamily. RNA methyltransferase RlmE family. RlmM subfamily. Monomer.

It localises to the cytoplasm. The enzyme catalyses cytidine(2498) in 23S rRNA + S-adenosyl-L-methionine = 2'-O-methylcytidine(2498) in 23S rRNA + S-adenosyl-L-homocysteine + H(+). In terms of biological role, catalyzes the 2'-O-methylation at nucleotide C2498 in 23S rRNA. This chain is Ribosomal RNA large subunit methyltransferase M, found in Histophilus somni (strain 2336) (Haemophilus somnus).